Consider the following 193-residue polypeptide: 3-isopropylmalate dehydratase small subunit (193 aa).

The protein belongs to the LeuD family. LeuD type 1 subfamily. In terms of assembly, heterodimer of LeuC and LeuD.

The catalysed reaction is (2R,3S)-3-isopropylmalate = (2S)-2-isopropylmalate. It functions in the pathway amino-acid biosynthesis; L-leucine biosynthesis; L-leucine from 3-methyl-2-oxobutanoate: step 2/4. Functionally, catalyzes the isomerization between 2-isopropylmalate and 3-isopropylmalate, via the formation of 2-isopropylmaleate. The sequence is that of 3-isopropylmalate dehydratase small subunit from Listeria monocytogenes serotype 4b (strain CLIP80459).